A 76-amino-acid polypeptide reads, in one-letter code: DNA-binding protein S1FA2 (76 aa).

The Nuclear localization signal motif lies at 50 to 55; it reads PPRKKK. The segment covering 51–66 has biased composition (basic residues); it reads PRKKKPLSKKKLKREK. The disordered stretch occupies residues 51–76; sequence PRKKKPLSKKKLKREKLKQGVPVPGE.

Belongs to the S1FA transcription factor family.

The protein localises to the nucleus. In terms of biological role, DNA-binding protein that specifically recognizes a negative element (S1F) within the RPS1 promoter. This is DNA-binding protein S1FA2 (S1FA2) from Arabidopsis thaliana (Mouse-ear cress).